The chain runs to 308 residues: tRNA dimethylallyltransferase (308 aa).

ATP is bound at residue 10–17; sequence GPTASGKT. 12-17 contacts substrate; that stretch reads TASGKT. Interaction with substrate tRNA stretches follow at residues 35–38 and 159–163; these read DSSL and QRIFR.

This sequence belongs to the IPP transferase family. In terms of assembly, monomer. It depends on Mg(2+) as a cofactor.

It catalyses the reaction adenosine(37) in tRNA + dimethylallyl diphosphate = N(6)-dimethylallyladenosine(37) in tRNA + diphosphate. In terms of biological role, catalyzes the transfer of a dimethylallyl group onto the adenine at position 37 in tRNAs that read codons beginning with uridine, leading to the formation of N6-(dimethylallyl)adenosine (i(6)A). The chain is tRNA dimethylallyltransferase from Francisella philomiragia subsp. philomiragia (strain ATCC 25017 / CCUG 19701 / FSC 153 / O#319-036).